The chain runs to 131 residues: Small ribosomal subunit protein uS8 (131 aa).

It belongs to the universal ribosomal protein uS8 family. Part of the 30S ribosomal subunit. Contacts proteins S5 and S12.

Functionally, one of the primary rRNA binding proteins, it binds directly to 16S rRNA central domain where it helps coordinate assembly of the platform of the 30S subunit. The sequence is that of Small ribosomal subunit protein uS8 from Erythrobacter litoralis (strain HTCC2594).